A 214-amino-acid chain; its full sequence is Phosphatidylserine decarboxylase proenzyme (214 aa).

The Schiff-base intermediate with substrate; via pyruvic acid role is filled by S182. A Pyruvic acid (Ser); by autocatalysis modification is found at S182.

This sequence belongs to the phosphatidylserine decarboxylase family. PSD-A subfamily. Heterodimer of a large membrane-associated beta subunit and a small pyruvoyl-containing alpha subunit. The cofactor is pyruvate. Post-translationally, is synthesized initially as an inactive proenzyme. Formation of the active enzyme involves a self-maturation process in which the active site pyruvoyl group is generated from an internal serine residue via an autocatalytic post-translational modification. Two non-identical subunits are generated from the proenzyme in this reaction, and the pyruvate is formed at the N-terminus of the alpha chain, which is derived from the carboxyl end of the proenzyme. The post-translation cleavage follows an unusual pathway, termed non-hydrolytic serinolysis, in which the side chain hydroxyl group of the serine supplies its oxygen atom to form the C-terminus of the beta chain, while the remainder of the serine residue undergoes an oxidative deamination to produce ammonia and the pyruvoyl prosthetic group on the alpha chain.

The protein resides in the cell membrane. The catalysed reaction is a 1,2-diacyl-sn-glycero-3-phospho-L-serine + H(+) = a 1,2-diacyl-sn-glycero-3-phosphoethanolamine + CO2. It participates in phospholipid metabolism; phosphatidylethanolamine biosynthesis; phosphatidylethanolamine from CDP-diacylglycerol: step 2/2. In terms of biological role, catalyzes the formation of phosphatidylethanolamine (PtdEtn) from phosphatidylserine (PtdSer). The sequence is that of Phosphatidylserine decarboxylase proenzyme from Burkholderia cenocepacia (strain ATCC BAA-245 / DSM 16553 / LMG 16656 / NCTC 13227 / J2315 / CF5610) (Burkholderia cepacia (strain J2315)).